The chain runs to 216 residues: Pyrophosphatase PpaX (216 aa).

D12 acts as the Nucleophile in catalysis.

This sequence belongs to the HAD-like hydrolase superfamily. PpaX family. Requires Mg(2+) as cofactor.

The catalysed reaction is diphosphate + H2O = 2 phosphate + H(+). In terms of biological role, hydrolyzes pyrophosphate formed during P-Ser-HPr dephosphorylation by HPrK/P. Might play a role in controlling the intracellular pyrophosphate pool. In Bacillus velezensis (strain DSM 23117 / BGSC 10A6 / LMG 26770 / FZB42) (Bacillus amyloliquefaciens subsp. plantarum), this protein is Pyrophosphatase PpaX.